Reading from the N-terminus, the 311-residue chain is Dehydrogenase/reductase SDR family member 7C (311 aa).

Residues 1–18 form the signal peptide; that stretch reads MGFLTFLIVPLLILGISG. 41-65 serves as a coordination point for NAD(+); that stretch reads VITDAISGLGKECSRVFHSAGARLV. Residue Thr-178 coordinates substrate. Tyr-191 acts as the Proton acceptor in catalysis.

The protein belongs to the short-chain dehydrogenases/reductases (SDR) family.

It localises to the secreted. In terms of biological role, putative oxidoreductase. The sequence is that of Dehydrogenase/reductase SDR family member 7C (dhrs7c) from Xenopus tropicalis (Western clawed frog).